The primary structure comprises 490 residues: Bifunctional protein GlmU (490 aa).

Residues 1-241 are pyrophosphorylase; the sequence is MSSPGDTAVL…SALVAGVNNR (241 aa). Residues 12–15, Lys-26, Gln-83, 88–89, 112–114, Gly-151, Glu-166, Asn-181, and Asn-239 each bind UDP-N-acetyl-alpha-D-glucosamine; these read LAAG, GT, and SGD. Position 114 (Asp-114) interacts with Mg(2+). Asn-239 lines the Mg(2+) pocket. Positions 242 to 262 are linker; that stretch reads VQLAQLGAELNRRIVAAHQLA. An N-acetyltransferase region spans residues 263–490; sequence GVTVVDPATT…AGGRPAGEAE (228 aa). 2 residues coordinate UDP-N-acetyl-alpha-D-glucosamine: Arg-344 and Lys-362. His-374 (proton acceptor) is an active-site residue. Residues Tyr-377 and Asn-388 each coordinate UDP-N-acetyl-alpha-D-glucosamine. Acetyl-CoA is bound by residues Ala-391, 397 to 398, Ser-416, and Ala-434; that span reads NY. A disordered region spans residues 462 to 490; that stretch reads RRKRPGSAAARAAEAAEKAAGGRPAGEAE. Residues 467–490 are compositionally biased toward low complexity; that stretch reads GSAAARAAEAAEKAAGGRPAGEAE.

The protein in the N-terminal section; belongs to the N-acetylglucosamine-1-phosphate uridyltransferase family. In the C-terminal section; belongs to the transferase hexapeptide repeat family. Homotrimer. Requires Mg(2+) as cofactor.

The protein localises to the cytoplasm. It catalyses the reaction alpha-D-glucosamine 1-phosphate + acetyl-CoA = N-acetyl-alpha-D-glucosamine 1-phosphate + CoA + H(+). The enzyme catalyses N-acetyl-alpha-D-glucosamine 1-phosphate + UTP + H(+) = UDP-N-acetyl-alpha-D-glucosamine + diphosphate. The protein operates within nucleotide-sugar biosynthesis; UDP-N-acetyl-alpha-D-glucosamine biosynthesis; N-acetyl-alpha-D-glucosamine 1-phosphate from alpha-D-glucosamine 6-phosphate (route II): step 2/2. It functions in the pathway nucleotide-sugar biosynthesis; UDP-N-acetyl-alpha-D-glucosamine biosynthesis; UDP-N-acetyl-alpha-D-glucosamine from N-acetyl-alpha-D-glucosamine 1-phosphate: step 1/1. Its pathway is bacterial outer membrane biogenesis; LPS lipid A biosynthesis. Catalyzes the last two sequential reactions in the de novo biosynthetic pathway for UDP-N-acetylglucosamine (UDP-GlcNAc). The C-terminal domain catalyzes the transfer of acetyl group from acetyl coenzyme A to glucosamine-1-phosphate (GlcN-1-P) to produce N-acetylglucosamine-1-phosphate (GlcNAc-1-P), which is converted into UDP-GlcNAc by the transfer of uridine 5-monophosphate (from uridine 5-triphosphate), a reaction catalyzed by the N-terminal domain. The polypeptide is Bifunctional protein GlmU (Mycobacterium avium (strain 104)).